The chain runs to 687 residues: Glycine--tRNA ligase beta subunit (687 aa).

The protein belongs to the class-II aminoacyl-tRNA synthetase family. Tetramer of two alpha and two beta subunits.

It is found in the cytoplasm. The catalysed reaction is tRNA(Gly) + glycine + ATP = glycyl-tRNA(Gly) + AMP + diphosphate. The sequence is that of Glycine--tRNA ligase beta subunit from Neisseria gonorrhoeae (strain ATCC 700825 / FA 1090).